We begin with the raw amino-acid sequence, 125 residues long: Nascent polypeptide-associated complex protein (125 aa).

Residues 9-76 (PRMMKQMQKM…SKNTSKTAEK (68 aa)) form the NAC-A/B domain.

Belongs to the NAC-alpha family. Homodimer. Interacts with the ribosome. Binds ribosomal RNA.

In terms of biological role, contacts the emerging nascent chain on the ribosome. The sequence is that of Nascent polypeptide-associated complex protein from Methanococcus vannielii (strain ATCC 35089 / DSM 1224 / JCM 13029 / OCM 148 / SB).